We begin with the raw amino-acid sequence, 181 residues long: Large ribosomal subunit protein uL5 (181 aa).

This sequence belongs to the universal ribosomal protein uL5 family. Part of the 50S ribosomal subunit; contacts the 5S rRNA and probably tRNA. Forms a bridge to the 30S subunit in the 70S ribosome.

This is one of the proteins that bind and probably mediate the attachment of the 5S RNA into the large ribosomal subunit, where it forms part of the central protuberance. In the 70S ribosome it contacts protein S13 of the 30S subunit (bridge B1b), connecting the 2 subunits; this bridge is implicated in subunit movement. May contact the P site tRNA; the 5S rRNA and some of its associated proteins might help stabilize positioning of ribosome-bound tRNAs. This is Large ribosomal subunit protein uL5 from Methanococcus maripaludis (strain C6 / ATCC BAA-1332).